We begin with the raw amino-acid sequence, 409 residues long: MQEIIGASLVFLCNEKCEVLEDYGVVFDEKIVEIGDYQSLTLKYPHLKAQFFENSVLLPAFINAHTHFEFSNNKASFDYGSFSGWLGSVLNNGGAILENCQGAIQNAISTQLKSGVGSVGAISNHLIEVNLLKESPLNAVVFLEFLGSSYSLEKLKAFEAKFKELKDLEDKKLKAALAVHAPYSVQKDMALSVIQLAKDSQSLLSTHFLESLEELEWVENSKGWFENFYQHFLKESHFKSLYKGANDYIDMFKDTHTLFVHNQFASLEALKRIKSQVKNAFLITCPFSNRLLSGQALDLERTKEAGLSVSVATDGLSSNISLSLLDELRAFLLTHNMPLLELAKIALLGATRHGAKALALNNGEIEANKRADLSVFGFNEKFTKEQAILQFLLHAKEVECLFLGGKRVI.

Zn(2+) is bound by residues histidine 65, histidine 67, histidine 207, and aspartate 314.

Belongs to the metallo-dependent hydrolases superfamily. The cofactor is Zn(2+).

It carries out the reaction adenosine + H2O + H(+) = inosine + NH4(+). Its function is as follows. Catalyzes the deamination of adenosine into inosine. Is also able to deaminate adenine, but with considerably less efficiency. Is not active toward 6-chloroadenine. In Helicobacter pylori (strain ATCC 700392 / 26695) (Campylobacter pylori), this protein is Adenosine deaminase.